Here is a 63-residue protein sequence, read N- to C-terminus: Beta-insect depressant toxin Im-3 (63 aa).

The LCN-type CS-alpha/beta domain occupies 1-63 (KEGYGVGKDG…KVWESSTNTC (63 aa)). 4 cysteine pairs are disulfide-bonded: cysteine 11-cysteine 63, cysteine 15-cysteine 37, cysteine 22-cysteine 44, and cysteine 26-cysteine 46.

The protein belongs to the long (4 C-C) scorpion toxin superfamily. Sodium channel inhibitor family. Beta subfamily. As to expression, expressed by the venom gland.

Its subcellular location is the secreted. Its function is as follows. Beta toxins bind voltage-independently at site-4 of sodium channels (Nav) and shift the voltage of activation toward more negative potentials thereby affecting sodium channel activation and promoting spontaneous and repetitive firing. Induces paralysis in cricket A.domestica but does not induce death. The sequence is that of Beta-insect depressant toxin Im-3 from Isometrus maculatus (Lesser brown scorpion).